The primary structure comprises 255 residues: Malonyl-[acyl-carrier protein] O-methyltransferase (255 aa).

The protein belongs to the methyltransferase superfamily.

It catalyses the reaction malonyl-[ACP] + S-adenosyl-L-methionine = malonyl-[ACP] methyl ester + S-adenosyl-L-homocysteine. It functions in the pathway cofactor biosynthesis; biotin biosynthesis. Its function is as follows. Converts the free carboxyl group of a malonyl-thioester to its methyl ester by transfer of a methyl group from S-adenosyl-L-methionine (SAM). It allows to synthesize pimeloyl-ACP via the fatty acid synthetic pathway. The protein is Malonyl-[acyl-carrier protein] O-methyltransferase of Serratia marcescens.